The chain runs to 167 residues: Leptin (167 aa).

A signal peptide spans 1 to 21 (MRCGPLYRFLWLWPYLSYVEA). Cysteine 117 and cysteine 167 are joined by a disulfide.

It belongs to the leptin family.

The protein resides in the secreted. In terms of biological role, key player in the regulation of energy balance and body weight control. Once released into the circulation, has central and peripheral effects by binding LEPR, found in many tissues, which results in the activation of several major signaling pathways. In the hypothalamus, acts as an appetite-regulating factor that induces a decrease in food intake and an increase in energy consumption by inducing anorexinogenic factors and suppressing orexigenic neuropeptides, also regulates bone mass and secretion of hypothalamo-pituitary-adrenal hormones. In the periphery, increases basal metabolism, influences reproductive function, regulates pancreatic beta-cell function and insulin secretion, is pro-angiogenic for endothelial cell and affects innate and adaptive immunity. In the arcuate nucleus of the hypothalamus, activates by depolarization POMC neurons inducing FOS and SOCS3 expression to release anorexigenic peptides and inhibits by hyperpolarization NPY neurons inducing SOCS3 with a consequent reduction on release of orexigenic peptides. In addition to its known satiety inducing effect, has a modulatory role in nutrient absorption. In the intestine, reduces glucose absorption by enterocytes by activating PKC and leading to a sequential activation of p38, PI3K and ERK signaling pathways which exerts an inhibitory effect on glucose absorption. Acts as a growth factor on certain tissues, through the activation of different signaling pathways increases expression of genes involved in cell cycle regulation such as CCND1, via JAK2-STAT3 pathway, or VEGFA, via MAPK1/3 and PI3K-AKT1 pathways. May also play an apoptotic role via JAK2-STAT3 pathway and up-regulation of BIRC5 expression. Pro-angiogenic, has mitogenic activity on vascular endothelial cells and plays a role in matrix remodeling by regulating the expression of matrix metalloproteinases (MMPs) and tissue inhibitors of metalloproteinases (TIMPs). In innate immunity, modulates the activity and function of neutrophils by increasing chemotaxis and the secretion of oxygen radicals. Increases phagocytosis by macrophages and enhances secretion of pro-inflammatory mediators. Increases cytotoxic ability of NK cells. Plays a pro-inflammatory role, in synergy with IL1B, by inducing NOS2 which promotes the production of IL6, IL8 and Prostaglandin E2, through a signaling pathway that involves JAK2, PI3K, MAP2K1/MEK1 and MAPK14/p38. In adaptive immunity, promotes the switch of memory T-cells towards T helper-1 cell immune responses. Increases CD4(+)CD25(-) T-cell proliferation and reduces autophagy during TCR (T-cell receptor) stimulation, through MTOR signaling pathway activation and BCL2 up-regulation. The polypeptide is Leptin (LEP) (Capra hircus (Goat)).